The sequence spans 140 residues: ATP synthase epsilon chain (140 aa).

It belongs to the ATPase epsilon chain family. F-type ATPases have 2 components, CF(1) - the catalytic core - and CF(0) - the membrane proton channel. CF(1) has five subunits: alpha(3), beta(3), gamma(1), delta(1), epsilon(1). CF(0) has three main subunits: a, b and c.

The protein resides in the cell inner membrane. In terms of biological role, produces ATP from ADP in the presence of a proton gradient across the membrane. This chain is ATP synthase epsilon chain, found in Pseudoalteromonas translucida (strain TAC 125).